We begin with the raw amino-acid sequence, 344 residues long: Ferredoxin--NADP reductase (344 aa).

S12, D31, K39, Y43, V83, I118, D285, and S326 together coordinate FAD.

The protein belongs to the ferredoxin--NADP reductase type 2 family. In terms of assembly, homodimer. FAD serves as cofactor.

It catalyses the reaction 2 reduced [2Fe-2S]-[ferredoxin] + NADP(+) + H(+) = 2 oxidized [2Fe-2S]-[ferredoxin] + NADPH. This Staphylococcus aureus (strain JH1) protein is Ferredoxin--NADP reductase.